Reading from the N-terminus, the 608-residue chain is MSKVIGIDLGTTNSAVAVMEGGESVIVPNSEGNRTTPSIVAFTKDGERLVGETAKRQAITNPDRTITSIKREMGTEYKVNIDGKDYTPEEISAMILQKLKADTESYLGEEVTEAVITVPAYFTDSQRQATKNAGKIAGLNVKRIINEPTAAALAYGIDKETDQHKVMVYDLGGGTFDVSILEVGDGVFEVLATRGNNRLGGDDFDEKLLNYLADEFMKQNGVDLRKDPTSKQRLKDAAENAKKELSTRVSTNVNLPFISAVNGTPVHLNMDITRSKFDELTSDLVEESLKPVRQALEDAGLSHNDIEKVLLVGGSTRIPAVQEAVKKLIGKNPQKDINPDECVAIGAALQGGVLTGEVKDLLLLDVTPLSLGIETLGGVCTKLIERNTTIPTKKSQVFTTAADGQTSVEIKVLQGEREMAADNTLLGQFNLTEIPAAPRGVPQIEVTFDIDANGIVNVSAKDLGSGKQQAMTITSSTKMSDDEIKRKVDEASKYAEEDKNKKETIETKNSAESVIYQVEKTIKDLGDKVSETEKSDINSKIEALKSILDSGDNKDIKAKTDELTQEMYKLSSKLYENNAQQPGASQEAKKDDDVVDADYEVVDDDENK.

Residue Thr175 is modified to Phosphothreonine; by autocatalysis.

Belongs to the heat shock protein 70 family.

In terms of biological role, acts as a chaperone. This is Chaperone protein DnaK from Finegoldia magna (strain ATCC 29328 / DSM 20472 / WAL 2508) (Peptostreptococcus magnus).